A 375-amino-acid chain; its full sequence is OVARIAN TUMOR DOMAIN-containing deubiquitinating enzyme 7 (375 aa).

Positions 1 to 18 (MAKTKQQKSKPKKQPHQK) are enriched in basic residues. The interval 1–23 (MAKTKQQKSKPKKQPHQKQGKDC) is disordered. An OTU domain is found at 37-161 (LKIIQVTADG…GEHYNSVRSK (125 aa)). Residue Asp45 is part of the active site. The Nucleophile role is filled by Cys48. His154 is a catalytic residue. Residues 202 to 250 (HVNAGAIKVVMSGSCCDNTEKAEQVLLQVNGDVDAAIEFLIADQGMESL) enclose the UBA-like domain. Polar residues-rich tracts occupy residues 251-264 (TENDTETASASDTI) and 290-305 (ASGNNSETVQAKCTTQ). The segment at 251–306 (TENDTETASASDTINPKHASDSPMENTEQAREELIEEESASGNNSETVQAKCTTQT) is disordered. The Nuclear localization signal motif lies at 308 to 315 (DKKIPRNK).

Belongs to the peptidase C85 family.

The protein resides in the nucleus. The enzyme catalyses Thiol-dependent hydrolysis of ester, thioester, amide, peptide and isopeptide bonds formed by the C-terminal Gly of ubiquitin (a 76-residue protein attached to proteins as an intracellular targeting signal).. Functionally, hydrolase that can remove conjugated ubiquitin from proteins in vitro and may therefore play an important regulatory role at the level of protein turnover by preventing degradation. Cysteine protease with a preference for 'Lys-63' over 'Lys-48' over 'Met-1' -linked ubiquitin (UB) tetramers as substrates. Also cleaves RUB-GST fusion. This chain is OVARIAN TUMOR DOMAIN-containing deubiquitinating enzyme 7, found in Arabidopsis thaliana (Mouse-ear cress).